Consider the following 79-residue polypeptide: ATP synthase subunit c (79 aa).

Helical transmembrane passes span 11 to 31 (IAVAIMIGLAAIGAAIGIGIL) and 53 to 73 (FFVVMGLVDAIPMIAVGLGLY).

Belongs to the ATPase C chain family. F-type ATPases have 2 components, F(1) - the catalytic core - and F(0) - the membrane proton channel. F(1) has five subunits: alpha(3), beta(3), gamma(1), delta(1), epsilon(1). F(0) has three main subunits: a(1), b(2) and c(10-14). The alpha and beta chains form an alternating ring which encloses part of the gamma chain. F(1) is attached to F(0) by a central stalk formed by the gamma and epsilon chains, while a peripheral stalk is formed by the delta and b chains.

The protein localises to the cell membrane. F(1)F(0) ATP synthase produces ATP from ADP in the presence of a proton or sodium gradient. F-type ATPases consist of two structural domains, F(1) containing the extramembraneous catalytic core and F(0) containing the membrane proton channel, linked together by a central stalk and a peripheral stalk. During catalysis, ATP synthesis in the catalytic domain of F(1) is coupled via a rotary mechanism of the central stalk subunits to proton translocation. In terms of biological role, key component of the F(0) channel; it plays a direct role in translocation across the membrane. A homomeric c-ring of between 10-14 subunits forms the central stalk rotor element with the F(1) delta and epsilon subunits. This Buchnera aphidicola subsp. Schizaphis graminum (strain Sg) protein is ATP synthase subunit c.